A 190-amino-acid polypeptide reads, in one-letter code: UPF0340 protein BCE33L5016 (190 aa).

This sequence belongs to the UPF0340 family.

The polypeptide is UPF0340 protein BCE33L5016 (Bacillus cereus (strain ZK / E33L)).